Here is a 90-residue protein sequence, read N- to C-terminus: Protein RALF-like 3 (90 aa).

A signal peptide spans 1–29 (MSNLRGTNRFILVAVLVSFVFLSIMNAEA). 2 disulfide bridges follow: Cys-59-Cys-67 and Cys-80-Cys-86.

This sequence belongs to the plant rapid alkalinization factor (RALF) family.

The protein resides in the secreted. Its function is as follows. Cell signaling peptide that may regulate plant stress, growth, and development. Mediates a rapid alkalinization of extracellular space by mediating a transient increase in the cytoplasmic Ca(2+) concentration leading to a calcium-dependent signaling events through a cell surface receptor and a concomitant activation of some intracellular mitogen-activated protein kinases. In Arabidopsis thaliana (Mouse-ear cress), this protein is Protein RALF-like 3 (RALFL3).